The primary structure comprises 142 residues: Galactose-6-phosphate isomerase subunit LacA (142 aa).

It belongs to the LacAB/RpiB family. In terms of assembly, heteromultimeric protein consisting of LacA and LacB.

It catalyses the reaction aldehydo-D-galactose 6-phosphate = keto-D-tagatose 6-phosphate. It functions in the pathway carbohydrate metabolism; D-galactose 6-phosphate degradation; D-tagatose 6-phosphate from D-galactose 6-phosphate: step 1/1. This chain is Galactose-6-phosphate isomerase subunit LacA, found in Enterococcus faecalis (strain ATCC 700802 / V583).